The following is an 82-amino-acid chain: Alpha-defensin 17 (82 aa).

The signal sequence occupies residues 1 to 8; the sequence is LLAFQVQA. The segment at 1–43 is disordered; sequence LLAFQVQADPIQNTDEETKTEEQPGEEDQAVSVSFGDPEGTSL. A propeptide spanning residues 9-47 is cleaved from the precursor; that stretch reads DPIQNTDEETKTEEQPGEEDQAVSVSFGDPEGTSLQEES. Disulfide bonds link Cys-53-Cys-81, Cys-55-Cys-70, and Cys-60-Cys-80.

This sequence belongs to the alpha-defensin family.

Its subcellular location is the secreted. Probably contributes to the antimicrobial barrier function of the small bowel mucosa. The sequence is that of Alpha-defensin 17 (Defa17) from Mus musculus (Mouse).